Here is a 338-residue protein sequence, read N- to C-terminus: Tryptophan--tRNA ligase (338 aa).

ATP is bound by residues 11-13 (QPS) and 19-20 (GN). A 'HIGH' region motif is present at residues 12-20 (PSGELSIGN). Residue D135 participates in L-tryptophan binding. Residues 147-149 (GSD), V189, and 198-202 (KMSKS) contribute to the ATP site. Positions 198–202 (KMSKS) match the 'KMSKS' region motif.

Belongs to the class-I aminoacyl-tRNA synthetase family. As to quaternary structure, homodimer.

It is found in the cytoplasm. The enzyme catalyses tRNA(Trp) + L-tryptophan + ATP = L-tryptophyl-tRNA(Trp) + AMP + diphosphate + H(+). Catalyzes the attachment of tryptophan to tRNA(Trp). This chain is Tryptophan--tRNA ligase, found in Vibrio parahaemolyticus serotype O3:K6 (strain RIMD 2210633).